Consider the following 115-residue polypeptide: NADH-ubiquinone oxidoreductase chain 3 (115 aa).

3 helical membrane passes run 3 to 23, 55 to 75, and 84 to 104; these read LMLA…IAFW, FFLV…LLPL, and LNTM…SLAY.

This sequence belongs to the complex I subunit 3 family. As to quaternary structure, core subunit of respiratory chain NADH dehydrogenase (Complex I) which is composed of 45 different subunits. Interacts with TMEM186. Interacts with TMEM242.

It localises to the mitochondrion inner membrane. The enzyme catalyses a ubiquinone + NADH + 5 H(+)(in) = a ubiquinol + NAD(+) + 4 H(+)(out). Its function is as follows. Core subunit of the mitochondrial membrane respiratory chain NADH dehydrogenase (Complex I) which catalyzes electron transfer from NADH through the respiratory chain, using ubiquinone as an electron acceptor. Essential for the catalytic activity of complex I. The protein is NADH-ubiquinone oxidoreductase chain 3 of Bos indicus (Zebu).